The sequence spans 359 residues: E3 ubiquitin-protein ligase RNF146 (359 aa).

Residues 36 to 74 (CAICLQTCVHPVSLPCKHVFCYLCVKGASWLGKRCALCR) form an RING-type zinc finger. Residues K84 and K94 each participate in a glycyl lysine isopeptide (Lys-Gly) (interchain with G-Cter in ubiquitin) cross-link. The WWE domain occupies 91–167 (EELKAASRGN…EHGRRRKIKR (77 aa)). A glycoprotein contacts are provided by Y107, R110, and W114. A Glycyl lysine isopeptide (Lys-Gly) (interchain with G-Cter in ubiquitin) cross-link involves residue K130. Positions 144, 153, 163, and 175 each coordinate a glycoprotein. Residue K175 forms a Glycyl lysine isopeptide (Lys-Gly) (interchain with G-Cter in ubiquitin) linkage. The interval 259–359 (ERSHRGEGEE…PDGQCTVTEV (101 aa)) is disordered. Over residues 284–298 (SVEETESDASSDSED) the composition is skewed to acidic residues. S290 and S294 each carry phosphoserine. Positions 306–322 (HSLTQQRLLVPNANQTV) are enriched in polar residues.

In terms of assembly, can form homooligomers. Interacts with PARsylated AXIN1, AXIN2, BLZF1, CASC3, H1-2, IPO7, LIG3, NCL, PARP1, XRCC1, XRCC5 and XRCC6. Interacts with DDB1, DHX15, IQGAP1, LRPPRC, PARP2, PRKDC, RUVBL2, TNKS1 and TNKS2. Binding often leads to interactor ubiquitination, in the presence of the appropriate E1 and E2 enzymes, and proteasomal degradation. In terms of processing, ubiquitinated; autoubiquitinated. Autoubiquitination is enhanced upon poly(ADP-ribose)-binding.

Its subcellular location is the cytoplasm. The protein resides in the cytosol. The protein localises to the nucleus. The enzyme catalyses S-ubiquitinyl-[E2 ubiquitin-conjugating enzyme]-L-cysteine + [acceptor protein]-L-lysine = [E2 ubiquitin-conjugating enzyme]-L-cysteine + N(6)-ubiquitinyl-[acceptor protein]-L-lysine.. The protein operates within protein modification; protein ubiquitination. In terms of biological role, E3 ubiquitin-protein ligase that specifically binds poly-ADP-ribosylated (PARsylated) proteins and mediates their ubiquitination and subsequent degradation. May regulate many important biological processes, such as cell survival and DNA damage response. Acts as an activator of the Wnt signaling pathway by mediating the ubiquitination of PARsylated AXIN1 and AXIN2, 2 key components of the beta-catenin destruction complex. Acts in cooperation with tankyrase proteins (TNKS and TNKS2), which mediate PARsylation of target proteins AXIN1, AXIN2, BLZF1, CASC3, TNKS and TNKS2. Recognizes and binds tankyrase-dependent PARsylated proteins via its WWE domain and mediates their ubiquitination, leading to their degradation. Different ubiquitin linkage types have been observed: TNKS2 undergoes ubiquitination at 'Lys-48' and 'Lys-63', while AXIN1 is only ubiquitinated at 'Lys-48'. May regulate TNKS and TNKS2 subcellular location, preventing aggregation at a centrosomal location. Neuroprotective protein. Protects the brain against N-methyl-D-aspartate (NMDA) receptor-mediated glutamate excitotoxicity and ischemia, by interfering with PAR-induced cell death, called parthanatos. Prevents nuclear translocation of AIFM1 in a PAR-binding dependent manner. Does not affect PARP1 activation. Protects against cell death induced by DNA damaging agents, such as N-methyl-N-nitro-N-nitrosoguanidine (MNNG) and rescues cells from G1 arrest. Promotes cell survival after gamma-irradiation. Facilitates DNA repair. This chain is E3 ubiquitin-protein ligase RNF146 (RNF146), found in Ailuropoda melanoleuca (Giant panda).